The chain runs to 173 residues: Photosystem I assembly protein Ycf3 (173 aa).

3 TPR repeats span residues 35–68 (AFVYYRDGMSAQAEGEYAEALEYYEEALTLEEDT), 72–105 (GYILYNMGLIYASNGDHDKALELYHQAIELNPRL), and 120–153 (GEKAKEDGDHDGGEALFDQAADYWIRAIRMAPNN).

It belongs to the Ycf3 family.

The protein resides in the cellular thylakoid membrane. Its function is as follows. Essential for the assembly of the photosystem I (PSI) complex. May act as a chaperone-like factor to guide the assembly of the PSI subunits. This Trichormus variabilis (strain ATCC 29413 / PCC 7937) (Anabaena variabilis) protein is Photosystem I assembly protein Ycf3.